Consider the following 151-residue polypeptide: Aspartate carbamoyltransferase regulatory chain (151 aa).

Positions 107, 112, 135, and 138 each coordinate Zn(2+).

This sequence belongs to the PyrI family. In terms of assembly, contains catalytic and regulatory chains. It depends on Zn(2+) as a cofactor.

Involved in allosteric regulation of aspartate carbamoyltransferase. The chain is Aspartate carbamoyltransferase regulatory chain from Thermococcus onnurineus (strain NA1).